Reading from the N-terminus, the 294-residue chain is UDP-3-O-acyl-N-acetylglucosamine deacetylase (294 aa).

Residues histidine 75, histidine 232, and aspartate 236 each coordinate Zn(2+). Histidine 259 functions as the Proton donor in the catalytic mechanism.

Belongs to the LpxC family. The cofactor is Zn(2+).

It carries out the reaction a UDP-3-O-[(3R)-3-hydroxyacyl]-N-acetyl-alpha-D-glucosamine + H2O = a UDP-3-O-[(3R)-3-hydroxyacyl]-alpha-D-glucosamine + acetate. It functions in the pathway glycolipid biosynthesis; lipid IV(A) biosynthesis; lipid IV(A) from (3R)-3-hydroxytetradecanoyl-[acyl-carrier-protein] and UDP-N-acetyl-alpha-D-glucosamine: step 2/6. Catalyzes the hydrolysis of UDP-3-O-myristoyl-N-acetylglucosamine to form UDP-3-O-myristoylglucosamine and acetate, the committed step in lipid A biosynthesis. This Sulfurovum sp. (strain NBC37-1) protein is UDP-3-O-acyl-N-acetylglucosamine deacetylase.